The primary structure comprises 304 residues: Acetyl-coenzyme A carboxylase carboxyl transferase subunit beta (304 aa).

In terms of domain architecture, CoA carboxyltransferase N-terminal spans 23–292 (VWTKCDSCGQ…PNPEAPREGV (270 aa)). Zn(2+) is bound by residues C27, C30, C46, and C49. A C4-type zinc finger spans residues 27-49 (CDSCGQVLYRAELERNLEVCPKC). Residues 284–304 (NPEAPREGVVVPPVPDQEPEA) form a disordered region. The span at 295–304 (PPVPDQEPEA) shows a compositional bias: pro residues.

The protein belongs to the AccD/PCCB family. Acetyl-CoA carboxylase is a heterohexamer composed of biotin carboxyl carrier protein (AccB), biotin carboxylase (AccC) and two subunits each of ACCase subunit alpha (AccA) and ACCase subunit beta (AccD). Requires Zn(2+) as cofactor.

The protein resides in the cytoplasm. It catalyses the reaction N(6)-carboxybiotinyl-L-lysyl-[protein] + acetyl-CoA = N(6)-biotinyl-L-lysyl-[protein] + malonyl-CoA. The protein operates within lipid metabolism; malonyl-CoA biosynthesis; malonyl-CoA from acetyl-CoA: step 1/1. In terms of biological role, component of the acetyl coenzyme A carboxylase (ACC) complex. Biotin carboxylase (BC) catalyzes the carboxylation of biotin on its carrier protein (BCCP) and then the CO(2) group is transferred by the transcarboxylase to acetyl-CoA to form malonyl-CoA. This is Acetyl-coenzyme A carboxylase carboxyl transferase subunit beta from Shigella flexneri serotype 5b (strain 8401).